A 332-amino-acid chain; its full sequence is 2,3-diketo-L-gulonate reductase (332 aa).

The active-site Proton donor is the histidine 44. Residues 168–174 (ITMVDMS), 224–225 (WK), and 304–306 (GHE) each bind NAD(+).

It belongs to the LDH2/MDH2 oxidoreductase family. DlgD subfamily. As to quaternary structure, homodimer.

Its subcellular location is the cytoplasm. It catalyses the reaction 3-dehydro-L-gulonate + NAD(+) = 2,3-dioxo-L-gulonate + NADH + H(+). The catalysed reaction is 3-dehydro-L-gulonate + NADP(+) = 2,3-dioxo-L-gulonate + NADPH + H(+). Its function is as follows. Catalyzes the reduction of 2,3-diketo-L-gulonate in the presence of NADH, to form 3-keto-L-gulonate. The sequence is that of 2,3-diketo-L-gulonate reductase from Escherichia fergusonii (strain ATCC 35469 / DSM 13698 / CCUG 18766 / IAM 14443 / JCM 21226 / LMG 7866 / NBRC 102419 / NCTC 12128 / CDC 0568-73).